The following is a 360-amino-acid chain: DNA replication and repair protein RecF (360 aa).

30–37 (GQNGSGKT) lines the ATP pocket.

The protein belongs to the RecF family.

It is found in the cytoplasm. Functionally, the RecF protein is involved in DNA metabolism; it is required for DNA replication and normal SOS inducibility. RecF binds preferentially to single-stranded, linear DNA. It also seems to bind ATP. The polypeptide is DNA replication and repair protein RecF (Shewanella piezotolerans (strain WP3 / JCM 13877)).